A 663-amino-acid chain; its full sequence is Polyunsaturated fatty acid lipoxygenase ALOX15 (663 aa).

Positions 2-115 (GVYRIRVSTG…ILSLPEGTGC (114 aa)) constitute a PLAT domain. The Lipoxygenase domain occupies 116 to 663 (TVVEDSQGLF…PSMVENSVAI (548 aa)). Position 149 is a phosphoserine (S149). H361, H366, H541, H545, and I663 together coordinate Fe cation.

This sequence belongs to the lipoxygenase family. Interacts with PEBP1; in response to IL13/interleukin-13, prevents the interaction of PEBP1 with RAF1 to activate the ERK signaling cascade. Fe cation is required as a cofactor. Detected in leukocytes, lung and aorta.

It localises to the cytoplasm. The protein localises to the cytosol. Its subcellular location is the cell membrane. The protein resides in the lipid droplet. It catalyses the reaction (5Z,8Z,11Z,14Z)-eicosatetraenoate + O2 = (12S)-hydroperoxy-(5Z,8Z,10E,14Z)-eicosatetraenoate. The catalysed reaction is (5Z,8Z,11Z,14Z)-eicosatetraenoate + O2 = (15S)-hydroperoxy-(5Z,8Z,11Z,13E)-eicosatetraenoate. It carries out the reaction (9Z,12Z)-octadecadienoate + O2 = (13S)-hydroperoxy-(9Z,11E)-octadecadienoate. The enzyme catalyses (12S)-hydroperoxy-(5Z,8Z,10E,14Z)-eicosatetraenoate = (8S)-hydroxy-(11S,12S)-epoxy-(5Z,9E,14Z)-eicosatrienoate. It catalyses the reaction (5Z,8Z,11Z,14Z)-eicosatetraenoate + 2 O2 = (14R,15S)-dihydroperoxy-(5Z,8Z,10E,12E)-eicosatetraenoate. The catalysed reaction is (5Z,8Z,11Z,14Z)-eicosatetraenoate + 2 O2 = (8S,15S)-dihydroperoxy-(5Z,9E,11Z,13E)-eicosatetraenoate. It carries out the reaction (14S,15R)-epoxy-(5Z,8Z,11Z)-eicosatrienoate + O2 = (8S)-hydroperoxy-(14S,15R)-epoxy-(5Z,9E,11Z)-eicosatrienoate. The enzyme catalyses (14S,15R)-epoxy-(5Z,8Z,11Z)-eicosatrienoate + O2 = (12S)-hydroperoxy-(14S,15R)-epoxy-(5Z,8Z,10E)-eicosatrienoate. It catalyses the reaction (14R,15S)-epoxy-(5Z,8Z,11Z)-eicosatrienoate + O2 = (5S)-hydroperoxy-(14R,15S)-epoxy-(6E,8Z,11Z)-eicosatrienoate. The catalysed reaction is (14R,15S)-epoxy-(5Z,8Z,11Z)-eicosatrienoate + O2 = (12S)-hydroperoxy-(14R,15S)-epoxy-(5Z,8Z,10E)-eicosatrienoate. It carries out the reaction (15R)-hydroperoxy-(5Z,8Z,11Z,13E)-eicosatetraenoate = 15-oxo-(5Z,8Z,11Z,13E)-eicosatetraenoate + H2O. The enzyme catalyses (15S)-hydroperoxy-(5Z,8Z,11Z,13E)-eicosatetraenoate = (14S,15S)-epoxy-(5Z,8Z,10E,12E)-eicosatetraenoate + H2O. It catalyses the reaction (4Z,7Z,10Z,13Z,16Z)-docosapentaenoate + O2 = 14-hydroperoxy-(4Z,7Z,10Z,12E,16Z)-docosapentaenoate. The catalysed reaction is (7Z,10Z,13Z,16Z,19Z)-docosapentaenoate + O2 = 14-hydroperoxy-(7Z,10Z,12E,16Z,19Z)-docosapentaenoate. It carries out the reaction (4Z,7Z,10Z,13Z,16Z,19Z)-docosahexaenoate + O2 = (14S)-hydroperoxy-(4Z,7Z,10Z,12E,16Z,19Z)-docosahexaenoate. The enzyme catalyses (4Z,7Z,10Z,13Z,16Z,19Z)-docosahexaenoate + O2 = (17S)-hydroperoxy-(4Z,7Z,10Z,13Z,15E,19Z)-docosahexaenoate. It catalyses the reaction (7S)-hydroperoxy-(4Z,8E,10Z,13Z,16Z,19Z)-docosahexaenoate + O2 = (7S,14S)-dihydroperoxy-(4Z,8E,10Z,12E,16Z,19Z)-docosahexaenoate. The catalysed reaction is (7S)-hydroperoxy-(4Z,8E,10Z,13Z,16Z,19Z)-docosahexaenoate + O2 = (7S,17S)-dihydroperoxy-(4Z,8E,10Z,13Z,15E,19Z)-docosahexaenoate. It carries out the reaction (4Z,7Z,10Z,13Z,16Z,19Z)-docosahexaenoate + O2 = (11S)-hydroperoxy-(4Z,7Z,9E,13Z,16Z,19Z)-docosahexaenoate. The enzyme catalyses N-(5Z,8Z,11Z,14Z)-eicosatetraenoyl-taurine + O2 = N-(12S)-hydroperoxy-(5Z,8Z,10E,14Z)-eicosatetraenoyl-taurine. It catalyses the reaction N-(5Z,8Z,11Z,14Z)-eicosatetraenoyl-gamma-aminobutanoate + O2 = N-(12S)-hydroperoxy-(5Z,8Z,10E,14Z)-eicosatetraenoyl-gamma-aminobutanoate. The catalysed reaction is N-(5Z,8Z,11Z,14Z)-eicosatetraenoyl-glycine + O2 = N-(12S)-hydroperoxy-(5Z,8Z,10E,14Z)-eicosatetraenoyl-glycine. It carries out the reaction N-(5Z,8Z,11Z,14Z)-eicosatetraenoyl-L-alanine + O2 = N-(12S)-hydroperoxy-(5Z,8Z,10E,14Z)-eicosatetraenoyl-alanine. The enzyme catalyses N-(5Z,8Z,11Z,14Z)-eicosatetraenoyl-taurine + O2 = N-(15S)-hydroperoxy-(5Z,8Z,11Z,13E)-eicosatetraenoyl-taurine. It catalyses the reaction N-(5Z,8Z,11Z,14Z)-eicosatetraenoyl-gamma-aminobutanoate + O2 = N-(15S)-hydroperoxy-(5Z,8Z,11Z,13E)-eicosatetraenoyl-gamma-aminobutanoate. The catalysed reaction is N-(5Z,8Z,11Z,14Z)-eicosatetraenoyl-glycine + O2 = N-(15S)-hydroperoxy-(5Z,8Z,11Z,13E)-eicosatetraenoyl-glycine. It carries out the reaction N-(5Z,8Z,11Z,14Z)-eicosatetraenoyl-L-alanine + O2 = N-(15S)-hydroperoxy-(5Z,8Z,11Z,13E)-eicosatetraenoyl-alanine. It participates in lipid metabolism; hydroperoxy eicosatetraenoic acid biosynthesis. Its function is as follows. Non-heme iron-containing dioxygenase that catalyzes the stereo-specific peroxidation of free and esterified polyunsaturated fatty acids generating a spectrum of bioactive lipid mediators. It inserts peroxyl groups at C12 or C15 of arachidonate ((5Z,8Z,11Z,14Z)-eicosatetraenoate) producing both 12-hydroperoxyeicosatetraenoate/12-HPETE and 15-hydroperoxyeicosatetraenoate/15-HPETE. It may then act on 12-HPETE to produce hepoxilins, which may show pro-inflammatory properties. Can also peroxidize linoleate ((9Z,12Z)-octadecadienoate) to 13-hydroperoxyoctadecadienoate. May participate in the sequential oxidations of DHA ((4Z,7Z,10Z,13Z,16Z,19Z)-docosahexaenoate) to generate specialized pro-resolving mediators (SPMs)like resolvin D5 ((7S,17S)-diHPDHA) and (7S,14S)-diHPDHA, that actively down-regulate the immune response and have anti-aggregation properties with platelets. Can convert epoxy fatty acids to hydroperoxy-epoxides derivatives followed by an intramolecular nucleophilic substitution leading to the formation of monocyclic endoperoxides. Plays an important role during the maintenance of self-tolerance by peroxidizing membrane-bound phosphatidylethanolamine which can then signal the sorting process for clearance of apoptotic cells during inflammation and prevent an autoimmune response. In addition to its role in the immune and inflammatory responses, this enzyme may play a role in epithelial wound healing in the cornea through production of lipoxin A4 (LXA(4)) and docosahexaenoic acid-derived neuroprotectin D1 (NPD1; 10R,17S-HDHA), both lipid autacoids exhibit anti-inflammatory and neuroprotective properties. Furthermore, it may regulate actin polymerization which is crucial for several biological processes such as the phagocytosis of apoptotic cells. It is also implicated in the generation of endogenous ligands for peroxisome proliferator activated receptor (PPAR-gamma), hence modulating macrophage development and function. It may also exert a negative effect on skeletal development by regulating bone mass through this pathway. As well as participates in ER stress and downstream inflammation in adipocytes, pancreatic islets, and liver. Finally, it is also involved in the cellular response to IL13/interleukin-13. The sequence is that of Polyunsaturated fatty acid lipoxygenase ALOX15 from Rattus norvegicus (Rat).